The following is a 370-amino-acid chain: Putative agmatine deiminase (370 aa).

Cysteine 361 acts as the Amidino-cysteine intermediate in catalysis.

This sequence belongs to the agmatine deiminase family.

The enzyme catalyses agmatine + H2O = N-carbamoylputrescine + NH4(+). This chain is Putative agmatine deiminase, found in Shewanella baltica (strain OS185).